A 235-amino-acid polypeptide reads, in one-letter code: Hydroxyacylglutathione hydrolase (235 aa).

Histidine 53, histidine 55, aspartate 57, histidine 58, histidine 109, aspartate 127, and histidine 165 together coordinate Zn(2+).

This sequence belongs to the metallo-beta-lactamase superfamily. Glyoxalase II family. Monomer. Requires Zn(2+) as cofactor.

It catalyses the reaction an S-(2-hydroxyacyl)glutathione + H2O = a 2-hydroxy carboxylate + glutathione + H(+). It participates in secondary metabolite metabolism; methylglyoxal degradation; (R)-lactate from methylglyoxal: step 2/2. In terms of biological role, thiolesterase that catalyzes the hydrolysis of S-D-lactoyl-glutathione to form glutathione and D-lactic acid. In Actinobacillus pleuropneumoniae serotype 5b (strain L20), this protein is Hydroxyacylglutathione hydrolase.